The sequence spans 288 residues: Cyclic UMP-AMP synthase (288 aa).

The tract at residues 1–23 (MPVPESQLERWSHQGATTTAKKT) is disordered. A UTP-binding site is contributed by Q46. ATP is bound at residue 46–48 (QGS). Mg(2+) is bound by residues D60 and D62. Residues D62 and 116-120 (RKTLK) contribute to the UTP site. D129 provides a ligand contact to Mg(2+). N166 is a binding site for UTP. ATP is bound by residues K194, S212, and E265.

The protein belongs to the CD-NTase family. E01 subfamily. The cofactor is Mg(2+).

The catalysed reaction is UTP + ATP = 3',3'-cUAMP + 2 diphosphate. Functionally, cyclic nucleotide synthase (second messenger synthase) of a CBASS antivirus system. CBASS (cyclic oligonucleotide-based antiphage signaling system) provides immunity against bacteriophage. The CD-NTase protein synthesizes cyclic nucleotides in response to infection; these serve as specific second messenger signals. The signals activate a diverse range of effectors, leading to bacterial cell death and thus abortive phage infection. A type I-B(UU) CBASS system. Its function is as follows. Cyclic dinucleotide synthase that catalyzes the synthesis of 3'3'-cyclic UMP-AMP (cUMP-AMP) from UTP and ATP, a second messenger for cell signal transduction. The protein is Cyclic UMP-AMP synthase of Rhodothermus marinus (strain SG0.5JP17-172).